The primary structure comprises 946 residues: Bifunctional glutamine synthetase adenylyltransferase/adenylyl-removing enzyme (946 aa).

The adenylyl removase stretch occupies residues 1-440 (MKPLSSPLQQ…VFNELIGDDE (440 aa)). Positions 449–946 (SEQWRELWQD…ASWQKWLVEE (498 aa)) are adenylyl transferase.

The protein belongs to the GlnE family. The cofactor is Mg(2+).

It catalyses the reaction [glutamine synthetase]-O(4)-(5'-adenylyl)-L-tyrosine + phosphate = [glutamine synthetase]-L-tyrosine + ADP. It carries out the reaction [glutamine synthetase]-L-tyrosine + ATP = [glutamine synthetase]-O(4)-(5'-adenylyl)-L-tyrosine + diphosphate. Its function is as follows. Involved in the regulation of glutamine synthetase GlnA, a key enzyme in the process to assimilate ammonia. When cellular nitrogen levels are high, the C-terminal adenylyl transferase (AT) inactivates GlnA by covalent transfer of an adenylyl group from ATP to specific tyrosine residue of GlnA, thus reducing its activity. Conversely, when nitrogen levels are low, the N-terminal adenylyl removase (AR) activates GlnA by removing the adenylyl group by phosphorolysis, increasing its activity. The regulatory region of GlnE binds the signal transduction protein PII (GlnB) which indicates the nitrogen status of the cell. This Escherichia coli O9:H4 (strain HS) protein is Bifunctional glutamine synthetase adenylyltransferase/adenylyl-removing enzyme.